The following is a 181-amino-acid chain: MKLKFISMAVFSALTLGVATNASAVTTVNGGTVHFKGEVVDAACAVNTNSANQTVLLGQVRSAKLANDGEKSSPVGFSIELNDCSSATAGHASIIFAGNVIATHNDVLSLQNSAAGSATNVGIQILDHTGTAVQFDGVTASTQFTLTDGTNKIPFQAVYYATGKSTPGIANADATFKVQYQ.

Residues 1 to 24 (MKLKFISMAVFSALTLGVATNASA) form the signal peptide. A disulfide bridge links Cys44 with Cys84.

This sequence belongs to the fimbrial protein family.

The protein localises to the fimbrium. Functionally, fimbriae (also called pili), polar filaments radiating from the surface of the bacterium to a length of 0.5-1.5 micrometers and numbering 100-300 per cell, enable bacteria to colonize the epithelium of specific host organs. In terms of biological role, the major fimbrial subunit. Interacts with alpha-sialic acid-(2-3)-beta-Gal containing receptors. It belongs to the group of Mrh (Mannose-resistant hemagglutination) fimbrial proteins. In Escherichia coli O6:K15:H31 (strain 536 / UPEC), this protein is S-fimbrial protein subunit SfaA (sfaA).